The sequence spans 608 residues: UvrABC system protein C (608 aa).

The GIY-YIG domain maps to 16-94 (NRPGVYRMFD…IKEWRPPYNI (79 aa)). In terms of domain architecture, UVR spans 204 to 239 (NALADELNVGMEQAAMRLDFEKAAELRDQVAILRRV).

The protein belongs to the UvrC family. As to quaternary structure, interacts with UvrB in an incision complex.

The protein localises to the cytoplasm. Functionally, the UvrABC repair system catalyzes the recognition and processing of DNA lesions. UvrC both incises the 5' and 3' sides of the lesion. The N-terminal half is responsible for the 3' incision and the C-terminal half is responsible for the 5' incision. The chain is UvrABC system protein C from Pseudomonas aeruginosa (strain LESB58).